Reading from the N-terminus, the 497-residue chain is Argininosuccinate lyase (497 aa).

It belongs to the lyase 1 family. Argininosuccinate lyase subfamily.

It is found in the cytoplasm. It catalyses the reaction 2-(N(omega)-L-arginino)succinate = fumarate + L-arginine. It participates in amino-acid biosynthesis; L-arginine biosynthesis; L-arginine from L-ornithine and carbamoyl phosphate: step 3/3. This Clavibacter michiganensis subsp. michiganensis (strain NCPPB 382) protein is Argininosuccinate lyase.